Consider the following 211-residue polypeptide: Thiamine-phosphate synthase (211 aa).

Residues 37–41 and Asn69 contribute to the 4-amino-2-methyl-5-(diphosphooxymethyl)pyrimidine site; that span reads QLRIK. Asp70 and Asp89 together coordinate Mg(2+). A 4-amino-2-methyl-5-(diphosphooxymethyl)pyrimidine-binding site is contributed by Ser108. 134–136 serves as a coordination point for 2-[(2R,5Z)-2-carboxy-4-methylthiazol-5(2H)-ylidene]ethyl phosphate; the sequence is TQT. Lys137 contacts 4-amino-2-methyl-5-(diphosphooxymethyl)pyrimidine. Residues Gly166 and 186–187 contribute to the 2-[(2R,5Z)-2-carboxy-4-methylthiazol-5(2H)-ylidene]ethyl phosphate site; that span reads IS.

Belongs to the thiamine-phosphate synthase family. Requires Mg(2+) as cofactor.

It carries out the reaction 2-[(2R,5Z)-2-carboxy-4-methylthiazol-5(2H)-ylidene]ethyl phosphate + 4-amino-2-methyl-5-(diphosphooxymethyl)pyrimidine + 2 H(+) = thiamine phosphate + CO2 + diphosphate. The enzyme catalyses 2-(2-carboxy-4-methylthiazol-5-yl)ethyl phosphate + 4-amino-2-methyl-5-(diphosphooxymethyl)pyrimidine + 2 H(+) = thiamine phosphate + CO2 + diphosphate. It catalyses the reaction 4-methyl-5-(2-phosphooxyethyl)-thiazole + 4-amino-2-methyl-5-(diphosphooxymethyl)pyrimidine + H(+) = thiamine phosphate + diphosphate. It participates in cofactor biosynthesis; thiamine diphosphate biosynthesis; thiamine phosphate from 4-amino-2-methyl-5-diphosphomethylpyrimidine and 4-methyl-5-(2-phosphoethyl)-thiazole: step 1/1. Functionally, condenses 4-methyl-5-(beta-hydroxyethyl)thiazole monophosphate (THZ-P) and 2-methyl-4-amino-5-hydroxymethyl pyrimidine pyrophosphate (HMP-PP) to form thiamine monophosphate (TMP). This Shigella boydii serotype 4 (strain Sb227) protein is Thiamine-phosphate synthase.